Here is a 134-residue protein sequence, read N- to C-terminus: DNA-directed RNA polymerase subunit omega (134 aa).

Residues 77–108 are disordered; that stretch reads IDEPEPDPASLLAAGGNASASGDEEEDAPEAV. The segment covering 85–97 has biased composition (low complexity); that stretch reads ASLLAAGGNASAS.

It belongs to the RNA polymerase subunit omega family. As to quaternary structure, the RNAP catalytic core consists of 2 alpha, 1 beta, 1 beta' and 1 omega subunit. When a sigma factor is associated with the core the holoenzyme is formed, which can initiate transcription.

It carries out the reaction RNA(n) + a ribonucleoside 5'-triphosphate = RNA(n+1) + diphosphate. Functionally, promotes RNA polymerase assembly. Latches the N- and C-terminal regions of the beta' subunit thereby facilitating its interaction with the beta and alpha subunits. This chain is DNA-directed RNA polymerase subunit omega, found in Rhizobium rhizogenes (strain K84 / ATCC BAA-868) (Agrobacterium radiobacter).